A 617-amino-acid chain; its full sequence is Dihydroxy-acid dehydratase (617 aa).

Residue D81 coordinates Mg(2+). C122 provides a ligand contact to [2Fe-2S] cluster. Residues D123 and K124 each contribute to the Mg(2+) site. K124 carries the N6-carboxylysine modification. C195 contacts [2Fe-2S] cluster. E491 provides a ligand contact to Mg(2+). S517 functions as the Proton acceptor in the catalytic mechanism.

The protein belongs to the IlvD/Edd family. As to quaternary structure, homodimer. [2Fe-2S] cluster is required as a cofactor. It depends on Mg(2+) as a cofactor.

It catalyses the reaction (2R)-2,3-dihydroxy-3-methylbutanoate = 3-methyl-2-oxobutanoate + H2O. The catalysed reaction is (2R,3R)-2,3-dihydroxy-3-methylpentanoate = (S)-3-methyl-2-oxopentanoate + H2O. It functions in the pathway amino-acid biosynthesis; L-isoleucine biosynthesis; L-isoleucine from 2-oxobutanoate: step 3/4. The protein operates within amino-acid biosynthesis; L-valine biosynthesis; L-valine from pyruvate: step 3/4. In terms of biological role, functions in the biosynthesis of branched-chain amino acids. Catalyzes the dehydration of (2R,3R)-2,3-dihydroxy-3-methylpentanoate (2,3-dihydroxy-3-methylvalerate) into 2-oxo-3-methylpentanoate (2-oxo-3-methylvalerate) and of (2R)-2,3-dihydroxy-3-methylbutanoate (2,3-dihydroxyisovalerate) into 2-oxo-3-methylbutanoate (2-oxoisovalerate), the penultimate precursor to L-isoleucine and L-valine, respectively. This Hydrogenovibrio crunogenus (strain DSM 25203 / XCL-2) (Thiomicrospira crunogena) protein is Dihydroxy-acid dehydratase.